A 124-amino-acid polypeptide reads, in one-letter code: UPF0337 protein blr1496 (124 aa).

It belongs to the UPF0337 (CsbD) family.

In Bradyrhizobium diazoefficiens (strain JCM 10833 / BCRC 13528 / IAM 13628 / NBRC 14792 / USDA 110), this protein is UPF0337 protein blr1496.